We begin with the raw amino-acid sequence, 288 residues long: 4-hydroxybenzoate octaprenyltransferase (288 aa).

8 consecutive transmembrane segments (helical) span residues 23-43 (IGSL…GRGI), 46-66 (AKIL…GCVV), 98-118 (ILFV…NSMT), 141-161 (LPQV…FAAV), 163-183 (ESLP…TVAY), 213-233 (LIIG…GWLM), 234-254 (NLGG…THQQ), and 268-288 (AFLN…ISYW).

This sequence belongs to the UbiA prenyltransferase family. Mg(2+) is required as a cofactor.

The protein resides in the cell inner membrane. The catalysed reaction is all-trans-octaprenyl diphosphate + 4-hydroxybenzoate = 4-hydroxy-3-(all-trans-octaprenyl)benzoate + diphosphate. Its pathway is cofactor biosynthesis; ubiquinone biosynthesis. Functionally, catalyzes the prenylation of para-hydroxybenzoate (PHB) with an all-trans polyprenyl group. Mediates the second step in the final reaction sequence of ubiquinone-8 (UQ-8) biosynthesis, which is the condensation of the polyisoprenoid side chain with PHB, generating the first membrane-bound Q intermediate 3-octaprenyl-4-hydroxybenzoate. In Yersinia pestis bv. Antiqua (strain Antiqua), this protein is 4-hydroxybenzoate octaprenyltransferase.